We begin with the raw amino-acid sequence, 612 residues long: Elongation factor 4 (612 aa).

A tr-type G domain is found at 11 to 193 (KHIRNFSIIA…KLVTDVPAPT (183 aa)). Residues 23-28 (DHGKST) and 140-143 (NKID) each bind GTP.

Belongs to the TRAFAC class translation factor GTPase superfamily. Classic translation factor GTPase family. LepA subfamily.

Its subcellular location is the cell membrane. It catalyses the reaction GTP + H2O = GDP + phosphate + H(+). In terms of biological role, required for accurate and efficient protein synthesis under certain stress conditions. May act as a fidelity factor of the translation reaction, by catalyzing a one-codon backward translocation of tRNAs on improperly translocated ribosomes. Back-translocation proceeds from a post-translocation (POST) complex to a pre-translocation (PRE) complex, thus giving elongation factor G a second chance to translocate the tRNAs correctly. Binds to ribosomes in a GTP-dependent manner. The protein is Elongation factor 4 of Latilactobacillus sakei subsp. sakei (strain 23K) (Lactobacillus sakei subsp. sakei).